The following is a 551-amino-acid chain: Arginine--tRNA ligase (551 aa).

The short motif at 125–135 is the 'HIGH' region element; it reads ANPTGPLHIGH.

This sequence belongs to the class-I aminoacyl-tRNA synthetase family. As to quaternary structure, monomer.

The protein resides in the cytoplasm. It carries out the reaction tRNA(Arg) + L-arginine + ATP = L-arginyl-tRNA(Arg) + AMP + diphosphate. In Nitratidesulfovibrio vulgaris (strain DP4) (Desulfovibrio vulgaris), this protein is Arginine--tRNA ligase.